Here is a 696-residue protein sequence, read N- to C-terminus: Putative cyclic nucleotide-gated ion channel 13 (696 aa).

Residues 1 to 81 (MAFGRNNRVR…QGSFLQNWNK (81 aa)) are Cytoplasmic-facing. Positions 45–65 (KPLSFGSHNKKRDSNSSTTTQ) are disordered. A helical transmembrane segment spans residues 82–102 (IFLFASVIALAIDPLFFYIPI). Residues 103-116 (VDGERHCLNLHRNL) are Extracellular-facing. A helical membrane pass occupies residues 117-137 (EIAASVLRTFIDAFYIIHIVF). At 138–170 (QFRTAYISPSSRVFGRGELVDDPKAIAIKYLSS) the chain is on the cytoplasmic side. A helical membrane pass occupies residues 171-191 (YFIIDLLSILPLPQLVVLAVI). Residues 192–204 (PNVNKPVSLITKD) are Extracellular-facing. Residues 205 to 225 (YLITVIFTQYIPRILRIYPLY) traverse the membrane as a helical segment. The Cytoplasmic portion of the chain corresponds to 226 to 243 (TEVTRTSGIVTETAWAGA). A helical membrane pass occupies residues 244–264 (AWNLSLYMLASHVFGALWYLI). Topologically, residues 265-367 (SVEREDRCWR…GQNLNTSKFV (103 aa)) are extracellular. A helical membrane pass occupies residues 368-388 (GEIIFAVSICISGLVLFALLI). Over 389–696 (GNMQKYLEST…SEPDFSLRNP (308 aa)) the chain is Cytoplasmic. A nucleoside 3',5'-cyclic phosphate is bound by residues 474 to 598 (LFEI…SKQL) and Glu545. The interval 590–605 (FRRLHSKQLQHTFRFY) is calmodulin-binding. The region spanning 610 to 639 (RTWGASFIQAAWRRHCRRKLARSLTEEEDR) is the IQ domain. A disordered region spans residues 677–696 (NNLPLLPPKPSEPDFSLRNP).

Belongs to the cyclic nucleotide-gated cation channel (TC 1.A.1.5) family. As to quaternary structure, homotetramer or heterotetramer.

It is found in the cell membrane. Putative cyclic nucleotide-gated ion channel. This Arabidopsis thaliana (Mouse-ear cress) protein is Putative cyclic nucleotide-gated ion channel 13 (CNGC13).